The primary structure comprises 166 residues: MSGSRGNSSNSSVSNNSNNNNNNDGGDERLLFLRSVGERNEIGFPSRFKSAHYKKPTRRHKSARQLISDENKRINALLTKANKAAESSTAARRLVPKATYFSVEAPPSIRPAKKYCDVTGLKGFYKSPTNNIRYHNAEIYQLIVKPMAPGVDQEYLKLRGANFVLK.

Over residues 1–24 the composition is skewed to low complexity; the sequence is MSGSRGNSSNSSVSNNSNNNNNND. Residues 1–28 are disordered; the sequence is MSGSRGNSSNSSVSNNSNNNNNNDGGDE.

It belongs to the IES6 family. In terms of assembly, component of the chromatin-remodeling INO80 complex, at least composed of ARP4, ARP5, ARP8, RVB1, RVB2, TAF14, NHP10, IES1, IES3, IES4, IES6, ACT1, IES2, IES5 and INO80.

It localises to the nucleus. Probably involved in transcription regulation via its interaction with the INO80 complex, a chromatin remodeling complex. Also involved in the regulation of telomere length. In Saccharomyces cerevisiae (strain ATCC 204508 / S288c) (Baker's yeast), this protein is Chromatin-remodeling complex subunit IES6 (IES6).